The sequence spans 406 residues: Cysteine desulfurase (406 aa).

Lys226 carries the N6-(pyridoxal phosphate)lysine modification. Cys364 (cysteine persulfide intermediate) is an active-site residue.

Belongs to the class-V pyridoxal-phosphate-dependent aminotransferase family. Csd subfamily. As to quaternary structure, homodimer. Interacts with SufE and the SufBCD complex composed of SufB, SufC and SufD. The interaction with SufE is required to mediate the direct transfer of the sulfur atom from the S-sulfanylcysteine. It depends on pyridoxal 5'-phosphate as a cofactor.

It is found in the cytoplasm. The enzyme catalyses (sulfur carrier)-H + L-cysteine = (sulfur carrier)-SH + L-alanine. The catalysed reaction is L-selenocysteine + AH2 = hydrogenselenide + L-alanine + A + H(+). The protein operates within cofactor biosynthesis; iron-sulfur cluster biosynthesis. Cysteine desulfurases mobilize the sulfur from L-cysteine to yield L-alanine, an essential step in sulfur metabolism for biosynthesis of a variety of sulfur-containing biomolecules. Component of the suf operon, which is activated and required under specific conditions such as oxidative stress and iron limitation. Acts as a potent selenocysteine lyase in vitro, that mobilizes selenium from L-selenocysteine. Selenocysteine lyase activity is however unsure in vivo. This is Cysteine desulfurase from Yersinia pseudotuberculosis serotype O:1b (strain IP 31758).